The sequence spans 429 residues: SET domain-containing protein 8 (429 aa).

The SET domain maps to 17-232 (KQITIKKIRK…ENEEVTINYG (216 aa)).

This sequence belongs to the class V-like SAM-binding methyltransferase superfamily.

The protein resides in the cytoplasm. The protein localises to the nucleus. The protein is SET domain-containing protein 8 (set8) of Schizosaccharomyces pombe (strain 972 / ATCC 24843) (Fission yeast).